The primary structure comprises 509 residues: Protein disulfide-isomerase (509 aa).

Positions 1-19 are cleaved as a signal peptide; it reads MLSRALLCLALAWAARVGA. Positions 20–136 constitute a Thioredoxin 1 domain; the sequence is DALEEEDNVL…IVNWLKKRTG (117 aa). Active-site nucleophile residues include Cys55 and Cys58. An intrachain disulfide couples Cys55 to Cys58. At Lys202 the chain carries N6-acetyllysine. N6-succinyllysine is present on residues Lys224 and Lys273. Ser333 and Ser359 each carry phosphoserine. A Thioredoxin 2 domain is found at 335-477; sequence ELTAEKITQF…FKKFLESGGQ (143 aa). Active-site nucleophile residues include Cys399 and Cys402. Cys399 and Cys402 are joined by a disulfide. Ser429 bears the Phosphoserine mark. A Prevents secretion from ER motif is present at residues 506–509; that stretch reads KDEL.

The protein belongs to the protein disulfide isomerase family. As to quaternary structure, heterodimer; heterodimerizes with the protein microsomal triglyceride transfer MTTP. Homodimer. Monomers and homotetramers may also occur. Interacts with P4HA2, forming a heterotetramer consisting of 2 alpha subunits (P4HA2) and 2 beta (P4HB), where P4HB plays the role of a structural subunit; this tetramer catalyzes the formation of 4-hydroxyproline in collagen. Also constitutes the structural subunit of the microsomal triacylglycerol transfer protein MTTP in mammalian cells. Stabilizes both enzymes and retain them in the ER without contributing to the catalytic activity. Binds UBQLN1. Interacts with ERO1B. Interacts with ILDR2. Interacts with ERN1/IRE1A (via N-terminus); the interaction is enhanced by phosphorylation of P4HB by FAM20C in response to endoplasmic reticulum stress and results in attenuation of ERN1 activity. Post-translationally, phosphorylation of Ser-359 by FAM20C is induced by endoplasmic reticulum stress and results in a functional switch from oxidoreductase to molecular chaperone. It also promotes interaction with ERN1.

The protein resides in the endoplasmic reticulum. The protein localises to the endoplasmic reticulum lumen. It is found in the melanosome. It localises to the cell membrane. The enzyme catalyses Catalyzes the rearrangement of -S-S- bonds in proteins.. Functionally, this multifunctional protein catalyzes the formation, breakage and rearrangement of disulfide bonds. At the cell surface, seems to act as a reductase that cleaves disulfide bonds of proteins attached to the cell. May therefore cause structural modifications of exofacial proteins. Inside the cell, seems to form/rearrange disulfide bonds of nascent proteins. At high concentrations and following phosphorylation by FAM20C, functions as a chaperone that inhibits aggregation of misfolded proteins. At low concentrations, facilitates aggregation (anti-chaperone activity). May be involved with other chaperones in the structural modification of the TG precursor in hormone biogenesis. Also acts as a structural subunit of various enzymes such as prolyl 4-hydroxylase and microsomal triacylglycerol transfer protein MTTP. Receptor for LGALS9; the interaction retains P4HB at the cell surface of Th2 T helper cells, increasing disulfide reductase activity at the plasma membrane, altering the plasma membrane redox state and enhancing cell migration. This Rattus norvegicus (Rat) protein is Protein disulfide-isomerase (P4hb).